The sequence spans 116 residues: Large ribosomal subunit protein bL20 (116 aa).

This sequence belongs to the bacterial ribosomal protein bL20 family.

In terms of biological role, binds directly to 23S ribosomal RNA and is necessary for the in vitro assembly process of the 50S ribosomal subunit. It is not involved in the protein synthesizing functions of that subunit. The protein is Large ribosomal subunit protein bL20 of Mycoplasmopsis synoviae (strain 53) (Mycoplasma synoviae).